The primary structure comprises 84 residues: Translational regulator CsrA (84 aa).

Belongs to the CsrA/RsmA family. As to quaternary structure, homodimer; the beta-strands of each monomer intercalate to form a hydrophobic core, while the alpha-helices form wings that extend away from the core.

It is found in the cytoplasm. Functionally, a translational regulator that binds mRNA to regulate translation initiation and/or mRNA stability. Usually binds in the 5'-UTR at or near the Shine-Dalgarno sequence preventing ribosome-binding, thus repressing translation. Its main target seems to be the major flagellin gene, while its function is anatagonized by FliW. This is Translational regulator CsrA from Leptospira interrogans serogroup Icterohaemorrhagiae serovar Lai (strain 56601).